Consider the following 163-residue polypeptide: Large ribosomal subunit protein uL11 (163 aa).

The tract at residues 1-25 (MAGTIEVLVAGGQADPGPPLGPELG) is disordered.

The protein belongs to the universal ribosomal protein uL11 family. In terms of assembly, part of the ribosomal stalk of the 50S ribosomal subunit. Interacts with L10 and the large rRNA to form the base of the stalk. L10 forms an elongated spine to which L12 dimers bind in a sequential fashion forming a multimeric L10(L12)X complex.

Forms part of the ribosomal stalk which helps the ribosome interact with GTP-bound translation factors. This is Large ribosomal subunit protein uL11 from Natronomonas pharaonis (strain ATCC 35678 / DSM 2160 / CIP 103997 / JCM 8858 / NBRC 14720 / NCIMB 2260 / Gabara) (Halobacterium pharaonis).